Reading from the N-terminus, the 147-residue chain is Large ribosomal subunit protein uL16 (147 aa).

The protein belongs to the universal ribosomal protein uL16 family. As to quaternary structure, part of the 50S ribosomal subunit.

Functionally, binds 23S rRNA and is also seen to make contacts with the A and possibly P site tRNAs. The chain is Large ribosomal subunit protein uL16 from Clostridium acetobutylicum (strain ATCC 824 / DSM 792 / JCM 1419 / IAM 19013 / LMG 5710 / NBRC 13948 / NRRL B-527 / VKM B-1787 / 2291 / W).